A 287-amino-acid polypeptide reads, in one-letter code: MTSLQRKGPQTRILSTGEEEKLKRDQALVSAFKQQKLEKEAQKNWDLFYKRNSTNFFKDRHWTTREFEELRSCREYEGQKLTLLEAGCGVGNCLFPLLEEDSNIFAYACDFSPRAVDYVKQHPLYNAERCKVFQCDLTRDDLLDHIPPESVDAVTLIFVLSAVHPEKMHLVLLNVYKVLKPGRSVLFRDYGLNDHAMLRFKAGSKLGENFYVRQDGTRSYFFTDEFLAKLFVDAGYEEVVNEYVFRETVNKKEGLCVPRVFLQSKFRKPPKDPAPTTDSASLLRKEF.

S-adenosyl-L-methionine-binding residues include W45, Y49, G87, D110, D136, L137, and I157. The disordered stretch occupies residues 267–287; it reads RKPPKDPAPTTDSASLLRKEF.

It belongs to the methyltransferase superfamily. METL family. Monomer. Interacts with SARS1/SerRS; interaction is mediated via tRNA(Ser) and is required for N(3)-methylcytidine methylation.

It is found in the cytoplasm. The protein resides in the nucleus. The catalysed reaction is cytidine(32) in tRNA(Ser) + S-adenosyl-L-methionine = N(3)-methylcytidine(32) in tRNA(Ser) + S-adenosyl-L-homocysteine + H(+). In terms of biological role, S-adenosyl-L-methionine-dependent methyltransferase that mediates N(3)-methylcytidine modification of residue 32 of the tRNA anticodon loop of tRNA(Ser), including tRNA(Ser)(UGA) and tRNA(Ser)(GCU). Interaction with SARS1/SerRS is required for N(3)-methylcytidine methylation. The polypeptide is tRNA N(3)-cytidine methyltransferase METTL6 (Mettl6) (Rattus norvegicus (Rat)).